The chain runs to 324 residues: Beta-ketoacyl-[acyl-carrier-protein] synthase III (324 aa).

Catalysis depends on residues C112 and H249. Positions 250–254 are ACP-binding; the sequence is QANDR. The active site involves N279.

The protein belongs to the thiolase-like superfamily. FabH family. In terms of assembly, homodimer.

Its subcellular location is the cytoplasm. It catalyses the reaction malonyl-[ACP] + acetyl-CoA + H(+) = 3-oxobutanoyl-[ACP] + CO2 + CoA. Its pathway is lipid metabolism; fatty acid biosynthesis. In terms of biological role, catalyzes the condensation reaction of fatty acid synthesis by the addition to an acyl acceptor of two carbons from malonyl-ACP. Catalyzes the first condensation reaction which initiates fatty acid synthesis and may therefore play a role in governing the total rate of fatty acid production. Possesses both acetoacetyl-ACP synthase and acetyl transacylase activities. Its substrate specificity determines the biosynthesis of branched-chain and/or straight-chain of fatty acids. The polypeptide is Beta-ketoacyl-[acyl-carrier-protein] synthase III (Streptococcus gordonii (strain Challis / ATCC 35105 / BCRC 15272 / CH1 / DL1 / V288)).